Reading from the N-terminus, the 307-residue chain is Olfactory receptor 5AC1 (307 aa).

Topologically, residues 1–28 are extracellular; that stretch reads MAEENKILVTHFVLTGLTDHPGLQAPLF. The chain crosses the membrane as a helical span at residues 29–49; that stretch reads LVFLVIYLITLVGNLGLMALI. The Cytoplasmic segment spans residues 50–56; it reads WKDPHLH. The chain crosses the membrane as a helical span at residues 57-77; that stretch reads TPIYLFLGSLAFADACTSSSV. The Extracellular portion of the chain corresponds to 78–99; it reads TSKMLINFLSKNHMLSMAKCAT. The cysteines at positions 97 and 179 are disulfide-linked. The chain crosses the membrane as a helical span at residues 100–120; that stretch reads QFYFFGSNATTECFLLVVMAY. At 121–143 the chain is on the cytoplasmic side; that stretch reads DRYVAICNPLLYPVVMSNSLCTQ. The helical transmembrane segment at 144–164 threads the bilayer; that stretch reads FIGISYFIGFLHSAIHVGLLF. Topologically, residues 165–195 are extracellular; the sequence is RLTFCRSNIIHYFYCEILQLFKISCTNPTVN. The helical transmembrane segment at 196–216 threads the bilayer; sequence ILLIFIFSAFIQVFTFMTLIV. Residues 217–239 are Cytoplasmic-facing; it reads SYSYILSAILKKKSEKGRSKAFS. The helical transmembrane segment at 240 to 260 threads the bilayer; sequence TCSAHLLSVSLFYGTLFFMYV. Residues 261–271 are Extracellular-facing; sequence SSRSGSAADQA. The chain crosses the membrane as a helical span at residues 272–292; the sequence is KMYSLFYTIIIPLLNPFIYSL. Topologically, residues 293-307 are cytoplasmic; that stretch reads RNKEVIDALRRIMKK.

Belongs to the G-protein coupled receptor 1 family.

It is found in the cell membrane. Odorant receptor. This Homo sapiens (Human) protein is Olfactory receptor 5AC1 (OR5AC1).